Here is a 383-residue protein sequence, read N- to C-terminus: L-lactate dehydrogenase (383 aa).

The region spanning 1-380 (MIISSGNDYR…NADCLVQAIK (380 aa)) is the FMN hydroxy acid dehydrogenase domain. Tyrosine 24 provides a ligand contact to substrate. FMN is bound by residues serine 106 and glutamine 127. Tyrosine 129 lines the substrate pocket. Position 155 (threonine 155) interacts with FMN. Arginine 164 contributes to the substrate binding site. An FMN-binding site is contributed by lysine 251. Histidine 275 acts as the Proton acceptor in catalysis. Arginine 278 provides a ligand contact to substrate. 306 to 330 (DSGIRNGLDVVRMLALGADTVLLGR) is a binding site for FMN.

It belongs to the FMN-dependent alpha-hydroxy acid dehydrogenase family. It depends on FMN as a cofactor.

Its subcellular location is the cell inner membrane. The catalysed reaction is (S)-lactate + A = pyruvate + AH2. Its function is as follows. Catalyzes the conversion of L-lactate to pyruvate. Is coupled to the respiratory chain. The sequence is that of L-lactate dehydrogenase from Acinetobacter baumannii (strain AB307-0294).